A 194-amino-acid polypeptide reads, in one-letter code: Fe/S biogenesis protein NfuA (194 aa).

[4Fe-4S] cluster contacts are provided by C151 and C154.

The protein belongs to the NfuA family. In terms of assembly, homodimer. The cofactor is [4Fe-4S] cluster.

Functionally, involved in iron-sulfur cluster biogenesis. Binds a 4Fe-4S cluster, can transfer this cluster to apoproteins, and thereby intervenes in the maturation of Fe/S proteins. Could also act as a scaffold/chaperone for damaged Fe/S proteins. This is Fe/S biogenesis protein NfuA from Actinobacillus succinogenes (strain ATCC 55618 / DSM 22257 / CCUG 43843 / 130Z).